The sequence spans 369 residues: uncharacterized protein (369 aa).

Residues 1 to 35 (MQTNNPSYFFRSESALQDEKRKEEKSHNPNGNPRN) form a disordered region. Residues 17–27 (QDEKRKEEKSH) are compositionally biased toward basic and acidic residues. WD repeat units lie at residues 83–127 (GHSG…CVET), 130–169 (GHTD…SRLL), 174–213 (GHSR…GSQL), 220–260 (GHQS…HEET), 263–301 (EHPD…VKDI), and 304–341 (GHYE…DNNE).

This is an uncharacterized protein from Schizosaccharomyces pombe (strain 972 / ATCC 24843) (Fission yeast).